Reading from the N-terminus, the 214-residue chain is Thiamine-phosphate synthase (214 aa).

4-amino-2-methyl-5-(diphosphooxymethyl)pyrimidine is bound by residues Gln-37–Lys-41 and Asn-73. Mg(2+) contacts are provided by Asp-74 and Asp-93. Ser-112 is a 4-amino-2-methyl-5-(diphosphooxymethyl)pyrimidine binding site. A 2-[(2R,5Z)-2-carboxy-4-methylthiazol-5(2H)-ylidene]ethyl phosphate-binding site is contributed by Thr-139 to Ser-141. 4-amino-2-methyl-5-(diphosphooxymethyl)pyrimidine is bound at residue Lys-142. Residues Gly-171 and Ile-191–Ser-192 contribute to the 2-[(2R,5Z)-2-carboxy-4-methylthiazol-5(2H)-ylidene]ethyl phosphate site.

The protein belongs to the thiamine-phosphate synthase family. It depends on Mg(2+) as a cofactor.

It catalyses the reaction 2-[(2R,5Z)-2-carboxy-4-methylthiazol-5(2H)-ylidene]ethyl phosphate + 4-amino-2-methyl-5-(diphosphooxymethyl)pyrimidine + 2 H(+) = thiamine phosphate + CO2 + diphosphate. The enzyme catalyses 2-(2-carboxy-4-methylthiazol-5-yl)ethyl phosphate + 4-amino-2-methyl-5-(diphosphooxymethyl)pyrimidine + 2 H(+) = thiamine phosphate + CO2 + diphosphate. The catalysed reaction is 4-methyl-5-(2-phosphooxyethyl)-thiazole + 4-amino-2-methyl-5-(diphosphooxymethyl)pyrimidine + H(+) = thiamine phosphate + diphosphate. Its pathway is cofactor biosynthesis; thiamine diphosphate biosynthesis; thiamine phosphate from 4-amino-2-methyl-5-diphosphomethylpyrimidine and 4-methyl-5-(2-phosphoethyl)-thiazole: step 1/1. In terms of biological role, condenses 4-methyl-5-(beta-hydroxyethyl)thiazole monophosphate (THZ-P) and 2-methyl-4-amino-5-hydroxymethyl pyrimidine pyrophosphate (HMP-PP) to form thiamine monophosphate (TMP). This is Thiamine-phosphate synthase from Listeria monocytogenes serotype 4b (strain F2365).